Here is a 490-residue protein sequence, read N- to C-terminus: Aspartyl/glutamyl-tRNA(Asn/Gln) amidotransferase subunit B (490 aa).

The protein belongs to the GatB/GatE family. GatB subfamily. Heterotrimer of A, B and C subunits.

It catalyses the reaction L-glutamyl-tRNA(Gln) + L-glutamine + ATP + H2O = L-glutaminyl-tRNA(Gln) + L-glutamate + ADP + phosphate + H(+). It carries out the reaction L-aspartyl-tRNA(Asn) + L-glutamine + ATP + H2O = L-asparaginyl-tRNA(Asn) + L-glutamate + ADP + phosphate + 2 H(+). Its function is as follows. Allows the formation of correctly charged Asn-tRNA(Asn) or Gln-tRNA(Gln) through the transamidation of misacylated Asp-tRNA(Asn) or Glu-tRNA(Gln) in organisms which lack either or both of asparaginyl-tRNA or glutaminyl-tRNA synthetases. The reaction takes place in the presence of glutamine and ATP through an activated phospho-Asp-tRNA(Asn) or phospho-Glu-tRNA(Gln). The protein is Aspartyl/glutamyl-tRNA(Asn/Gln) amidotransferase subunit B of Methylobacterium sp. (strain 4-46).